We begin with the raw amino-acid sequence, 271 residues long: D-methionine-binding lipoprotein MetQ (271 aa).

Residues 1 to 22 (MAFKFKTFAAVGALIGSLALAG) form the signal peptide. C23 carries N-palmitoyl cysteine lipidation. The S-diacylglycerol cysteine moiety is linked to residue C23.

The protein belongs to the NlpA lipoprotein family.

It is found in the cell membrane. Its function is as follows. This protein is a component of a D-methionine permease, a binding protein-dependent, ATP-driven transport system. The chain is D-methionine-binding lipoprotein MetQ (metQ) from Salmonella typhi.